Reading from the N-terminus, the 309-residue chain is Ribonuclease Z (309 aa).

Zn(2+) is bound by residues histidine 63, histidine 65, aspartate 67, histidine 68, histidine 143, aspartate 213, and histidine 271. Aspartate 67 (proton acceptor) is an active-site residue.

This sequence belongs to the RNase Z family. In terms of assembly, homodimer. Zn(2+) serves as cofactor.

The enzyme catalyses Endonucleolytic cleavage of RNA, removing extra 3' nucleotides from tRNA precursor, generating 3' termini of tRNAs. A 3'-hydroxy group is left at the tRNA terminus and a 5'-phosphoryl group is left at the trailer molecule.. In terms of biological role, zinc phosphodiesterase, which displays some tRNA 3'-processing endonuclease activity. Probably involved in tRNA maturation, by removing a 3'-trailer from precursor tRNA. The chain is Ribonuclease Z from Phocaeicola vulgatus (strain ATCC 8482 / DSM 1447 / JCM 5826 / CCUG 4940 / NBRC 14291 / NCTC 11154) (Bacteroides vulgatus).